Here is a 117-residue protein sequence, read N- to C-terminus: Immunoglobulin kappa variable 1D-17 (117 aa).

A signal peptide spans 1–22; the sequence is MDMRVPAQLLGLLLLWFPGARC. The segment at 23–45 is framework-1; the sequence is NIQMTQSPSAMSASVGDRVTITC. Positions 23-117 constitute an Ig-like domain; the sequence is NIQMTQSPSA…YYCLQHNSYP (95 aa). Cys45 and Cys110 are disulfide-bonded. A complementarity-determining-1 region spans residues 46–56; that stretch reads RARQGISNYLA. The framework-2 stretch occupies residues 57 to 71; that stretch reads WFQQKPGKVPKHLIY. Residues 72-78 are complementarity-determining-2; that stretch reads AASSLQS. Residues 79–110 form a framework-3 region; the sequence is GVPSRFSGSGSGTEFTLTISSLQPEDFATYYC. The complementarity-determining-3 stretch occupies residues 111 to 117; that stretch reads LQHNSYP.

In terms of assembly, immunoglobulins are composed of two identical heavy chains and two identical light chains; disulfide-linked.

It is found in the secreted. It localises to the cell membrane. Its function is as follows. V region of the variable domain of immunoglobulin light chains that participates in the antigen recognition. Immunoglobulins, also known as antibodies, are membrane-bound or secreted glycoproteins produced by B lymphocytes. In the recognition phase of humoral immunity, the membrane-bound immunoglobulins serve as receptors which, upon binding of a specific antigen, trigger the clonal expansion and differentiation of B lymphocytes into immunoglobulins-secreting plasma cells. Secreted immunoglobulins mediate the effector phase of humoral immunity, which results in the elimination of bound antigens. The antigen binding site is formed by the variable domain of one heavy chain, together with that of its associated light chain. Thus, each immunoglobulin has two antigen binding sites with remarkable affinity for a particular antigen. The variable domains are assembled by a process called V-(D)-J rearrangement and can then be subjected to somatic hypermutations which, after exposure to antigen and selection, allow affinity maturation for a particular antigen. The polypeptide is Immunoglobulin kappa variable 1D-17 (Homo sapiens (Human)).